A 65-amino-acid chain; its full sequence is Hainantoxin-X.3 (65 aa).

The signal sequence occupies residues 1 to 20; sequence MNMKILVLVAVLCLVVSTHA. A propeptide spanning residues 21–37 is cleaved from the precursor; that stretch reads ERHSKTDMGDSPMIQER. Cystine bridges form between cysteine 39/cysteine 56, cysteine 46/cysteine 59, and cysteine 55/cysteine 64.

It belongs to the neurotoxin 36 family. 02 subfamily. As to expression, expressed by the venom gland.

Its subcellular location is the secreted. Functionally, reversibly blocks N-type calcium channels (Cav2.2/CACNA1B) in rat dorsal root ganglion cells. Elicits no toxic symptoms in either vertebrates or invertebrates during a period of 48 hours post-injection, when it was assayed in vivo by direct injection into mice and cockroaches. This is Hainantoxin-X.3 from Cyriopagopus hainanus (Chinese bird spider).